The sequence spans 88 residues: Mini zinc finger protein 3 (88 aa).

Residues 26–72 (YVECQKNHAANIGGYAVDGCREFMASGGDDALTCAACGCHRNFHRRE) form a ZF-HD dimerization-type; degenerate zinc finger.

Homo- and heterodimers. Interacts with ZHD3, ZHD5, ZHD6, ZHD7, ZHD8, ZHD9, ZHD10 and ZHD13. As to expression, mostly expressed in roots, stems and flowers, present in seedlings and leaves, and weakly observed in inflorescence and siliques.

The protein resides in the cytoplasm. Inhibits zinc finger homeodomain (ZHD) transcription factors by interacting with them to prevent both their nuclear localization and their DNA-binding properties. Involved in integrating signals from multiple hormones by regulating the expression of specific genes. Promotes the formation of ectopic shoot meristems on leaf margins. This Arabidopsis thaliana (Mouse-ear cress) protein is Mini zinc finger protein 3 (MIF3).